Consider the following 152-residue polypeptide: Endoribonuclease YbeY (152 aa).

3 residues coordinate Zn(2+): H113, H117, and H123.

The protein belongs to the endoribonuclease YbeY family. Zn(2+) is required as a cofactor.

It localises to the cytoplasm. Functionally, single strand-specific metallo-endoribonuclease involved in late-stage 70S ribosome quality control and in maturation of the 3' terminus of the 16S rRNA. This Pseudoalteromonas atlantica (strain T6c / ATCC BAA-1087) protein is Endoribonuclease YbeY.